The chain runs to 592 residues: MRTMYCGEVTEAVLGQEIQLVGWINKQRDLGGVIFLDMRDRAGIVQVFFDADTPIATALATTVRNEFCIQIKGLVRARPEGQVNKDMTTGGIEILGLELEILNRSEPLPLDSNQQNSEEQRLRYRYLDLRRPEMAKRMQFRAKVSSFVRRFLDDQDFLDVETPILTKATPEGARDYLVPSRTHKGKFFALPQSPQLFKQLLMMSGMDRYYQIVKCFRDEDLRADRQPEFTQIDIETSFMNADQVMEISEEMIVKLFKEMLNVDLGNFPKMTYAEALRRFGSDKPDLRIDFELYDVADLMKDVEFNVFSGPANDPDSRVAVICVPGGAKLSRKNIDEYGKFVTIYGAKGLAWMKVNEVAKGLEGVQSPVAKFLNEEIVTELLIRTGAKDGDIILFGADKSNIVSEAIGALRLKVAQDLGLVKDQWKPLWVIDFPMFEPLDDGGLTPLHHPFTAPIGLTVEELEANPVGAISNAYDMVLNGCELGGGSVRIHKQDMQAAIFRILKISDEEAEDKFGFLLEALKYGAPPHAGLAFGLDRLVMLMTGTSSIRDVIAFPKTASAACPLTNAPSFANPAVLAELNVAVVADPKKVISE.

Residue E171 participates in L-aspartate binding. Residues 195 to 198 (QLFK) form an aspartate region. R217 contributes to the L-aspartate binding site. ATP contacts are provided by residues 217-219 (RDE) and Q226. H447 serves as a coordination point for L-aspartate. E481 lines the ATP pocket. An L-aspartate-binding site is contributed by R488. Residue 533 to 536 (GLDR) coordinates ATP.

It belongs to the class-II aminoacyl-tRNA synthetase family. Type 1 subfamily. As to quaternary structure, homodimer.

The protein resides in the cytoplasm. It catalyses the reaction tRNA(Asx) + L-aspartate + ATP = L-aspartyl-tRNA(Asx) + AMP + diphosphate. In terms of biological role, aspartyl-tRNA synthetase with relaxed tRNA specificity since it is able to aspartylate not only its cognate tRNA(Asp) but also tRNA(Asn). Reaction proceeds in two steps: L-aspartate is first activated by ATP to form Asp-AMP and then transferred to the acceptor end of tRNA(Asp/Asn). The sequence is that of Aspartate--tRNA(Asp/Asn) ligase from Psychromonas ingrahamii (strain DSM 17664 / CCUG 51855 / 37).